The following is a 113-amino-acid chain: Mini zinc finger protein 3 (113 aa).

A ZF-HD dimerization-type; degenerate zinc finger spans residues 24–83 (YGECRRNHAASTGGHAVDGCREFIAAEDGGGGNSTGAVGVAAAALKCAACGCHRSFHRRV). The disordered stretch occupies residues 93 to 113 (DCDSGDTSSSSPSSSSSLSSE). Over residues 97-113 (GDTSSSSPSSSSSLSSE) the composition is skewed to low complexity.

Homo- and heterodimers.

It is found in the cytoplasm. Inhibits zinc finger homeodomain (ZHD) transcription factors, by interacting with them to prevent both their nuclear localization and their DNA-binding properties. The protein is Mini zinc finger protein 3 (MIF3) of Oryza sativa subsp. indica (Rice).